A 215-amino-acid polypeptide reads, in one-letter code: Phosphoserine phosphatase (215 aa).

Catalysis depends on Asp-11, which acts as the Nucleophile. Mg(2+)-binding residues include Asp-11 and Asp-13. The active-site Proton donor is the Asp-13. Residues Glu-20, Arg-56, 99 to 100, and Lys-144 contribute to the substrate site; that span reads SG. Residue Asp-167 participates in Mg(2+) binding. Asn-170 contributes to the substrate binding site.

The protein belongs to the HAD-like hydrolase superfamily. SerB family. Mg(2+) is required as a cofactor.

It catalyses the reaction O-phospho-L-serine + H2O = L-serine + phosphate. It carries out the reaction O-phospho-D-serine + H2O = D-serine + phosphate. It functions in the pathway amino-acid biosynthesis; L-serine biosynthesis; L-serine from 3-phospho-D-glycerate: step 3/3. The sequence is that of Phosphoserine phosphatase from Streptococcus thermophilus (strain ATCC BAA-250 / LMG 18311).